The sequence spans 528 residues: Poly(A) RNA polymerase GLD2 (528 aa).

2 disordered regions span residues 1-41 (MYPN…QPQQ) and 99-121 (RDQS…KRRS). 2 stretches are compositionally biased toward low complexity: residues 16 to 32 (PCEQ…EQPL) and 102 to 113 (SPLISPASPSSS). The Mg(2+) site is built by Asp259 and Asp261. The PAP-associated domain maps to 428-481 (LGDLLLGFLKYFAIEFDWSKDIISVREAKALPRSDDYEWRNKFICVEEPYDRTN).

It belongs to the DNA polymerase type-B-like family. GLD2 subfamily. As to quaternary structure, component of a complex at least composed of cpeb1, cpsf1, tent2/gld2, pabpc1/ePAB, parn and sympk. Following oocyte maturation, parn is expelled from the complex. Interacts with rbm9 and sympk. The cofactor is Mg(2+). Mn(2+) is required as a cofactor.

The protein resides in the cytoplasm. It carries out the reaction RNA(n) + ATP = RNA(n)-3'-adenine ribonucleotide + diphosphate. Its function is as follows. Cytoplasmic poly(A) RNA polymerase that adds successive AMP monomers to the 3'-end of specific RNAs, forming a poly(A) tail. In contrast to the canonical nuclear poly(A) RNA polymerase, it only adds poly(A) to selected cytoplasmic mRNAs during oocyte maturation. Plays a central role during oocyte maturation by mediating polyadenylation of dormant mRNAs, which contain 5'AAUAAA-3' sequence in their 3'-UTR. In immature oocytes, polyadenylation of poly(A) tails is counteracted by the ribonuclease parn. During maturation parn is excluded from the ribonucleoprotein complex, allowing poly(A) elongation and activation of mRNAs. May not play a role in replication-dependent histone mRNA degradation. The sequence is that of Poly(A) RNA polymerase GLD2 (tent2) from Xenopus tropicalis (Western clawed frog).